The chain runs to 420 residues: 3-isopropylmalate dehydratase large subunit (420 aa).

[4Fe-4S] cluster contacts are provided by Cys301, Cys361, and Cys364.

Belongs to the aconitase/IPM isomerase family. LeuC type 2 subfamily. In terms of assembly, heterodimer of LeuC and LeuD. Requires [4Fe-4S] cluster as cofactor.

It catalyses the reaction (2R,3S)-3-isopropylmalate = (2S)-2-isopropylmalate. The protein operates within amino-acid biosynthesis; L-leucine biosynthesis; L-leucine from 3-methyl-2-oxobutanoate: step 2/4. In terms of biological role, catalyzes the isomerization between 2-isopropylmalate and 3-isopropylmalate, via the formation of 2-isopropylmaleate. In Desulfovibrio desulfuricans (strain ATCC 27774 / DSM 6949 / MB), this protein is 3-isopropylmalate dehydratase large subunit.